A 483-amino-acid chain; its full sequence is MSYPQGYLYQPSASLALYSCPAYSTSVISGPRTDELGRSSSGSAFSPYAGSTAFTAPSPGYNSHLQYGADPAAAAAAAFSSYVGSPYDHTPGMAGSLGYHPYAAPLGSYPYGDPAYRKNATRDATATLKAWLNEHRKNPYPTKGEKIMLAIITKMTLTQVSTWFANARRRLKKENKMTWTPRNRSEDEEEEENIDLEKNDEDEPQKPEDKGDPEGPEAGGAEQKAASGCERLQGPPTPAGKETEGSLSDSDFKEPPSEGRLDALQGPPRTGGPSPAGPAAARLAEDPAPHYPAGAPAPGPHPAAGEVPPGPGGPSVIHSPPPPPPPAVLAKPKLWSLAEIATSSDKVKDGGGGNEGSPCPPCPGPIAGQALGGSRASPAPAPSRSPSAQCPFPGGTVLSRPLYYTAPFYPGYTNYGSFGHLHGHPGPGPGPTTGPGSHFNGLNQTVLNRADALAKDPKMLRSQSQLDLCKDSPYELKKGMSDI.

Residues 113–175 (DPAYRKNATR…NARRRLKKEN (63 aa)) constitute a DNA-binding region (homeobox; TALE-type). 2 disordered regions span residues 177 to 392 (MTWT…QCPF) and 423 to 442 (GHPG…FNGL). The segment covering 186 to 203 (EDEEEEENIDLEKNDEDE) has biased composition (acidic residues). 2 stretches are compositionally biased toward basic and acidic residues: residues 204–213 (PQKPEDKGDP) and 250–261 (SDFKEPPSEGRL). 2 stretches are compositionally biased toward low complexity: residues 266 to 282 (GPPR…AAAR) and 374 to 388 (SRAS…SPSA). Serine 274 is subject to Phosphoserine. Serine 464 is subject to Phosphoserine.

It belongs to the TALE/IRO homeobox family.

It is found in the nucleus. In terms of biological role, establishes the cardiac repolarization gradient by its repressive actions on the KCND2 potassium-channel gene. Required for retinal cone bipolar cell differentiation. May regulate contrast adaptation in the retina and control specific aspects of visual function in circuits of the mammalian retina. Could be involved in the regulation of both the cell cycle and apoptosis in prostate cancer cells. Involved in craniofacial and gonadal development. Modulates the migration of progenitor cell populations in branchial arches and gonads by repressing CXCL12. This chain is Iroquois-class homeodomain protein IRX-5 (IRX5), found in Homo sapiens (Human).